The following is a 178-amino-acid chain: Large ribosomal subunit protein uL10 (178 aa).

The protein belongs to the universal ribosomal protein uL10 family. Part of the ribosomal stalk of the 50S ribosomal subunit. The N-terminus interacts with L11 and the large rRNA to form the base of the stalk. The C-terminus forms an elongated spine to which L12 dimers bind in a sequential fashion forming a multimeric L10(L12)X complex.

Its function is as follows. Forms part of the ribosomal stalk, playing a central role in the interaction of the ribosome with GTP-bound translation factors. This chain is Large ribosomal subunit protein uL10, found in Albidiferax ferrireducens (strain ATCC BAA-621 / DSM 15236 / T118) (Rhodoferax ferrireducens).